Reading from the N-terminus, the 109-residue chain is Phosphoribosyl-ATP pyrophosphatase (109 aa).

This sequence belongs to the PRA-PH family.

The protein localises to the cytoplasm. It carries out the reaction 1-(5-phospho-beta-D-ribosyl)-ATP + H2O = 1-(5-phospho-beta-D-ribosyl)-5'-AMP + diphosphate + H(+). Its pathway is amino-acid biosynthesis; L-histidine biosynthesis; L-histidine from 5-phospho-alpha-D-ribose 1-diphosphate: step 2/9. This Sphingopyxis alaskensis (strain DSM 13593 / LMG 18877 / RB2256) (Sphingomonas alaskensis) protein is Phosphoribosyl-ATP pyrophosphatase.